A 257-amino-acid polypeptide reads, in one-letter code: Indole-3-glycerol phosphate synthase (257 aa).

It belongs to the TrpC family.

The enzyme catalyses 1-(2-carboxyphenylamino)-1-deoxy-D-ribulose 5-phosphate + H(+) = (1S,2R)-1-C-(indol-3-yl)glycerol 3-phosphate + CO2 + H2O. It functions in the pathway amino-acid biosynthesis; L-tryptophan biosynthesis; L-tryptophan from chorismate: step 4/5. In Phenylobacterium zucineum (strain HLK1), this protein is Indole-3-glycerol phosphate synthase.